Reading from the N-terminus, the 388-residue chain is MVPPPPPPSRLLLVALVGLLSLHEVVAEPAEEAGTRCPEGLWPLPPQVLPRVTYTQVRQGQAEGITFFYHPCAHLWLKLQLAVLAHLCVAKPTLIPDFSLPWDRPLVLTAWGTALEMAWIEPAWAAQWLKRQWRRRRRKQRKSVWFLSDNLFGPTPMMPAPRRGKLCGRRCVQAPTLAFALRSWRPPGVEVTSRGPRRSSLSVVKKRGLRAALGLQSTPSGLRVSLASSQSLKAQQRTLGNSSVAPVSLMTGVTEGNGRFRTEAQMPSGQGNPGGCACPGQVSPAPRAAVPPRVARGPTPRTEEAAWAAMALTFLLVLLTLATLCTRLHRNFRRSESIYWGPTSDSQDTVAAILKRRLPLPSRRIKRSRRRPLLPPTPDSGPDSESSD.

The N-terminal stretch at 1–27 (MVPPPPPPSRLLLVALVGLLSLHEVVA) is a signal peptide. Over 28-304 (EPAEEAGTRC…ARGPTPRTEE (277 aa)) the chain is Extracellular. A helical membrane pass occupies residues 305–325 (AAWAAMALTFLLVLLTLATLC). Residues 326-388 (TRLHRNFRRS…DSGPDSESSD (63 aa)) are Cytoplasmic-facing. Over residues 361–372 (PSRRIKRSRRRP) the composition is skewed to basic residues. Residues 361-388 (PSRRIKRSRRRPLLPPTPDSGPDSESSD) are disordered.

The protein localises to the cell membrane. It is found in the cytoplasm. May act as a tumor suppressor. Inhibits tumor cell growth, when overexpressed. This is Tumor protein p53-inducible protein 13 (Tp53i13) from Rattus norvegicus (Rat).